We begin with the raw amino-acid sequence, 348 residues long: Rhodopsin (348 aa).

Residues 1 to 33 (TEGPYFYVPMVNTTGIVRSPYEYPQYYLVNPAA) are Extracellular-facing. The N-linked (GlcNAc...) asparagine glycan is linked to Asn-12. Residues 34-58 (YAVLGAYMFFLIILGFPINFLTLYV) form a helical membrane-spanning segment. The Cytoplasmic portion of the chain corresponds to 59 to 70 (TLEHKKLRTPLN). Residues 71–93 (YILLNLAVADLFMVIGGFTTTMY) form a helical membrane-spanning segment. The Extracellular segment spans residues 94-107 (SSMHGYFVLGRLGC). An intrachain disulfide couples Cys-107 to Cys-184. The chain crosses the membrane as a helical span at residues 108-130 (NLEGFSATLGGMISLWSLAVLAI). The 'Ionic lock' involved in activated form stabilization motif lies at 131–133 (ERW). The Cytoplasmic portion of the chain corresponds to 131–149 (ERWVVVCKPISNFRFGENH). Residues 150–170 (AIMGVSLTWTMALACTVPPLV) form a helical membrane-spanning segment. The Extracellular segment spans residues 171–199 (GWSRYIPEGMQCSCGIDYYTRAEGFNNES). Asn-197 carries N-linked (GlcNAc...) asparagine glycosylation. The helical transmembrane segment at 200-221 (FVLYMFFCHFMVPLIIIFFCYG) threads the bilayer. The Cytoplasmic portion of the chain corresponds to 222–249 (RLLCAVKEAAAAQQESETTQRAEREVTR). Residues 250 to 271 (MVILMVIGYLVCWLPYASVAWF) traverse the membrane as a helical segment. At 272-283 (IFTHQGSEFGPL) the chain is on the extracellular side. A helical membrane pass occupies residues 284 to 305 (FMTIPAFFAKSSSIYNPVIYIC). Lys-293 carries the N6-(retinylidene)lysine modification. The Cytoplasmic segment spans residues 306-348 (MNKQFRNCMITTLFCGKNPFEGEEEGASSTKTEASSASSVSPA). Cys-320 is lipidated: S-palmitoyl cysteine. The disordered stretch occupies residues 327 to 348 (GEEEGASSTKTEASSASSVSPA). Residues 332-348 (ASSTKTEASSASSVSPA) are compositionally biased toward low complexity.

This sequence belongs to the G-protein coupled receptor 1 family. Opsin subfamily. Post-translationally, phosphorylated on some or all of the serine and threonine residues present in the C-terminal region. Contains one covalently linked retinal chromophore.

It is found in the membrane. The protein resides in the cell projection. It localises to the cilium. The protein localises to the photoreceptor outer segment. Photoreceptor required for image-forming vision at low light intensity. While most salt water fish species use retinal as chromophore, most freshwater fish use 3-dehydroretinal, or a mixture of retinal and 3-dehydroretinal. Light-induced isomerization of 11-cis to all-trans retinal triggers a conformational change that activates signaling via G-proteins. Subsequent receptor phosphorylation mediates displacement of the bound G-protein alpha subunit by arrestin and terminates signaling. The chain is Rhodopsin (rho) from Neoniphon argenteus (Clearfin squirrelfish).